A 697-amino-acid chain; its full sequence is Elongation factor G 2 (697 aa).

One can recognise a tr-type G domain in the interval 5–280 (SKYRNIGIFA…AVVDYLPAPD (276 aa)). GTP-binding positions include 14–21 (AHVDAGKT), 78–82 (DTPGH), and 132–135 (NKLD).

Belongs to the TRAFAC class translation factor GTPase superfamily. Classic translation factor GTPase family. EF-G/EF-2 subfamily.

Its subcellular location is the cytoplasm. Functionally, catalyzes the GTP-dependent ribosomal translocation step during translation elongation. During this step, the ribosome changes from the pre-translocational (PRE) to the post-translocational (POST) state as the newly formed A-site-bound peptidyl-tRNA and P-site-bound deacylated tRNA move to the P and E sites, respectively. Catalyzes the coordinated movement of the two tRNA molecules, the mRNA and conformational changes in the ribosome. In Shewanella sp. (strain MR-7), this protein is Elongation factor G 2.